We begin with the raw amino-acid sequence, 442 residues long: Protein phosphatase 2C 3 (442 aa).

The segment at 30 to 100 (RFRMSPSEMN…VSISDGNSSV (71 aa)) is disordered. Residues 79 to 90 (PEEESVSLEDSD) are compositionally biased toward acidic residues. The PPM-type phosphatase domain occupies 120 to 433 (RYGVASVCGR…DNVSVVVIDL (314 aa)). Residues Asp162, Gly163, and Asp339 each contribute to the Mn(2+) site. Positions 363–401 (GRGRRRGETQTPGRRSEEEGKEEEEKVVGSRKNGKRGEI) are disordered. Residues 376 to 390 (RRSEEEGKEEEEKVV) show a composition bias toward basic and acidic residues. Residue Asp424 participates in Mn(2+) binding.

Belongs to the PP2C family. In terms of assembly, part of a K(+)-channel calcium-sensing kinase/phosphatase complex composed by a calcium sensor CBL (CBL1, CBL2, CBL3 or CBL9), a kinase CIPK (CIPK6, CIPK16 or CIPK23), a phosphatase PP2C (AIP1) and a K(+)-channel (AKT1). Interacts with AKT1 and CIPK23. Interacts with PYL8/RCAR3 in an abscisic acid-independent. Interacts with PYR1/RCAR11 in an abscisic acid-dependent manner. Requires Mg(2+) as cofactor. The cofactor is Mn(2+). In terms of tissue distribution, expressed in shoot meristem, vascular tissues of cotyledons, and in primary roots surrounding the root meristem. Highly expressed in seeds.

The protein resides in the cell membrane. Its subcellular location is the cytoplasm. The protein localises to the nucleus. The catalysed reaction is O-phospho-L-seryl-[protein] + H2O = L-seryl-[protein] + phosphate. It catalyses the reaction O-phospho-L-threonyl-[protein] + H2O = L-threonyl-[protein] + phosphate. Its function is as follows. Involved in the negative regulation of the K(+) potassium channel AKT1 by its dephosphorylation, antagonistically to CIPK proteins (e.g. CIPK23). Functions as a positive regulator of abscisic acid-mediated cell signaling during seedling growth. Involved in the regulation of seed dormancy. Acts as a negative regulator of seed dormancy by inhibiting abscisic signaling and subsequently activating gibberellic acid signaling. The polypeptide is Protein phosphatase 2C 3 (Arabidopsis thaliana (Mouse-ear cress)).